The following is a 200-amino-acid chain: MATQRVLPQSKETLLQSYNKRLKDDIKSILENFTEIIKTAKIEDETQVSRPAQAEQDHYEMHVRAANIVRAGESLMKLVSDLKQFLILNDFPSVNDAISLQNQQLRSLQEECDKKLISLRDEIAIDLYELEEEYYSSSYSQWDTDLPLCEAYHRVDNWASPSSSSSSTQGDQEEVEILPSQETEPQHHLNGQGTSSLEKM.

A coiled-coil region spans residues 93-123 (SVNDAISLQNQQLRSLQEECDKKLISLRDEI). A disordered region spans residues 159–200 (ASPSSSSSSTQGDQEEVEILPSQETEPQHHLNGQGTSSLEKM). Residues 189 to 200 (LNGQGTSSLEKM) are compositionally biased toward polar residues.

Belongs to the Mediator complex subunit 22 family. In terms of assembly, component of the Mediator complex.

It is found in the nucleus. Its function is as follows. Component of the Mediator complex, a coactivator involved in the regulated transcription of nearly all RNA polymerase II-dependent genes. Mediator functions as a bridge to convey information from gene-specific regulatory proteins to the basal RNA polymerase II transcription machinery. Mediator is recruited to promoters by direct interactions with regulatory proteins and serves as a scaffold for the assembly of a functional preinitiation complex with RNA polymerase II and the general transcription factors. In Takifugu rubripes (Japanese pufferfish), this protein is Mediator of RNA polymerase II transcription subunit 22 (med22).